The chain runs to 163 residues: NADH-quinone oxidoreductase subunit I (163 aa).

2 consecutive 4Fe-4S ferredoxin-type domains span residues 53-83 (LRRYPNGEERCIACKLCEAICPAQAITIEAG) and 94-123 (VRYDIDMVKCIYCGFCQEACPVDAIVEGPN). [4Fe-4S] cluster-binding residues include cysteine 63, cysteine 66, cysteine 69, cysteine 73, cysteine 103, cysteine 106, cysteine 109, and cysteine 113.

Belongs to the complex I 23 kDa subunit family. In terms of assembly, NDH-1 is composed of 14 different subunits. Subunits NuoA, H, J, K, L, M, N constitute the membrane sector of the complex. The cofactor is [4Fe-4S] cluster.

Its subcellular location is the cell inner membrane. The enzyme catalyses a quinone + NADH + 5 H(+)(in) = a quinol + NAD(+) + 4 H(+)(out). NDH-1 shuttles electrons from NADH, via FMN and iron-sulfur (Fe-S) centers, to quinones in the respiratory chain. The immediate electron acceptor for the enzyme in this species is believed to be ubiquinone. Couples the redox reaction to proton translocation (for every two electrons transferred, four hydrogen ions are translocated across the cytoplasmic membrane), and thus conserves the redox energy in a proton gradient. In Brucella anthropi (strain ATCC 49188 / DSM 6882 / CCUG 24695 / JCM 21032 / LMG 3331 / NBRC 15819 / NCTC 12168 / Alc 37) (Ochrobactrum anthropi), this protein is NADH-quinone oxidoreductase subunit I.